The sequence spans 405 residues: Polyketide biosynthesis cytochrome P450 PksS (405 aa).

Residues 231 to 251 form a helical membrane-spanning segment; it reads LYSMLFLLVVAGLETTVNLLG. Position 352 (cysteine 352) interacts with heme.

This sequence belongs to the cytochrome P450 family.

The protein localises to the cell membrane. It participates in antibiotic biosynthesis; bacillaene biosynthesis. Its function is as follows. Involved in the metabolism of the antibiotic polyketide bacillaene which is involved in secondary metabolism. The substrate is dihydrobacillaene. This chain is Polyketide biosynthesis cytochrome P450 PksS (pksS), found in Bacillus subtilis (strain 168).